The primary structure comprises 126 residues: Aspartate 1-decarboxylase (126 aa).

Ser25 acts as the Schiff-base intermediate with substrate; via pyruvic acid in catalysis. Ser25 bears the Pyruvic acid (Ser) mark. Substrate is bound at residue Thr57. The Proton donor role is filled by Tyr58. Substrate is bound at residue 73–75 (GGA).

The protein belongs to the PanD family. Heterooctamer of four alpha and four beta subunits. The cofactor is pyruvate. Post-translationally, is synthesized initially as an inactive proenzyme, which is activated by self-cleavage at a specific serine bond to produce a beta-subunit with a hydroxyl group at its C-terminus and an alpha-subunit with a pyruvoyl group at its N-terminus.

The protein localises to the cytoplasm. It catalyses the reaction L-aspartate + H(+) = beta-alanine + CO2. Its pathway is cofactor biosynthesis; (R)-pantothenate biosynthesis; beta-alanine from L-aspartate: step 1/1. In terms of biological role, catalyzes the pyruvoyl-dependent decarboxylation of aspartate to produce beta-alanine. The chain is Aspartate 1-decarboxylase from Xanthomonas oryzae pv. oryzae (strain MAFF 311018).